The primary structure comprises 208 residues: dITP/XTP pyrophosphatase (208 aa).

Substrate is bound at residue 16–21 (TGNAGK). 2 residues coordinate Mg(2+): glutamate 46 and aspartate 75. The Proton acceptor role is filled by aspartate 75. Residues serine 76, 155–158 (FGYD), lysine 178, and 183–184 (HR) contribute to the substrate site.

This sequence belongs to the HAM1 NTPase family. Homodimer. Mg(2+) serves as cofactor.

It catalyses the reaction XTP + H2O = XMP + diphosphate + H(+). The enzyme catalyses dITP + H2O = dIMP + diphosphate + H(+). It carries out the reaction ITP + H2O = IMP + diphosphate + H(+). Functionally, pyrophosphatase that catalyzes the hydrolysis of nucleoside triphosphates to their monophosphate derivatives, with a high preference for the non-canonical purine nucleotides XTP (xanthosine triphosphate), dITP (deoxyinosine triphosphate) and ITP. Seems to function as a house-cleaning enzyme that removes non-canonical purine nucleotides from the nucleotide pool, thus preventing their incorporation into DNA/RNA and avoiding chromosomal lesions. In Deinococcus deserti (strain DSM 17065 / CIP 109153 / LMG 22923 / VCD115), this protein is dITP/XTP pyrophosphatase.